We begin with the raw amino-acid sequence, 662 residues long: 72 kDa type IV collagenase (662 aa).

Positions 1–29 (MEARLVWGVLVGPLRVLCVLCCLLGHAIA) are cleaved as a signal peptide. The propeptide at 30 to 109 (APSPIIKFPG…PRCGNPDVAN (80 aa)) is activation peptide. The Cysteine switch signature appears at 100-107 (PRCGNPDV). C102 lines the Zn(2+) pocket. Residues 110-221 (YNFFPRKPKW…LWTLGEGQVV (112 aa)) form a collagenase-like 1 region. Ca(2+)-binding residues include D134 and D168. Zn(2+) is bound by residues H178 and D180. Residues D185 and G186 each contribute to the Ca(2+) site. H193 contacts Zn(2+). Ca(2+)-binding residues include G200, G202, and D204. H206 is a Zn(2+) binding site. Residues D208, D209, and E211 each contribute to the Ca(2+) site. A collagen-binding region spans residues 222–396 (RVKYGNADGE…WGFCPDQGYS (175 aa)). 3 Fibronectin type-II domains span residues 228–276 (ADGE…FCPH), 286–334 (GDGQ…FCPE), and 344–392 (SEGA…FCPD). 6 disulfide bridges follow: C233-C259, C247-C274, C291-C317, C305-C332, C349-C375, and C363-C390. The tract at residues 397–467 (LFLVAAHEFG…GPTPTLGPVT (71 aa)) is collagenase-like 2. H403 lines the Zn(2+) pocket. E404 is a catalytic residue. 2 residues coordinate Zn(2+): H407 and H413. A required for inhibitor TIMP2 binding region spans residues 414–662 (SQDPGALMAP…GSIKSDWLGC (249 aa)). C471 and C662 are joined by a disulfide. Hemopexin repeat units follow at residues 474–518 (DIVF…WPEL), 519–565 (PEKI…GLPP), 567–615 (VQQV…WNAI), and 616–662 (PDNL…WLGC). Residues D478, D523, and D571 each contribute to the Ca(2+) site. N-linked (GlcNAc...) asparagine glycosylation is present at N575. Ca(2+) is bound at residue D620. N644 carries N-linked (GlcNAc...) asparagine glycosylation.

Belongs to the peptidase M10A family. Interacts (via the C-terminal hemopexin-like domains-containing region) with the integrin alpha-V/beta-3; the interaction promotes vascular invasion in angiogenic vessels and melamoma cells. Interacts (via the C-terminal PEX domain) with TIMP2 (via the C-terminal); the interaction inhibits the degradation activity. Interacts with GSK3B. Ca(2+) serves as cofactor. The cofactor is Zn(2+). In terms of processing, phosphorylation on multiple sites modulates enzymatic activity. Phosphorylated by PKC in vitro. Post-translationally, the propeptide is processed by MMP14 (MT-MMP1) and MMP16 (MT-MMP3). Autocatalytic cleavage in the C-terminal produces the anti-angiogenic peptide, PEX. This processing appears to be facilitated by binding integrin integrinv/beta3.

It is found in the secreted. It localises to the extracellular space. The protein resides in the extracellular matrix. The protein localises to the membrane. Its subcellular location is the nucleus. It catalyses the reaction Cleavage of gelatin type I and collagen types IV, V, VII, X. Cleaves the collagen-like sequence Pro-Gln-Gly-|-Ile-Ala-Gly-Gln.. Functionally, ubiquitinous metalloproteinase that is involved in diverse functions such as remodeling of the vasculature, angiogenesis, tissue repair, tumor invasion, inflammation, and atherosclerotic plaque rupture. As well as degrading extracellular matrix proteins, can also act on several nonmatrix proteins such as big endothelial 1 and beta-type CGRP promoting vasoconstriction. Also cleaves KISS at a Gly-|-Leu bond. Appears to have a role in myocardial cell death pathways. Contributes to myocardial oxidative stress by regulating the activity of GSK3beta. Cleaves GSK3beta in vitro. Involved in the formation of the fibrovascular tissues. Its function is as follows. PEX, the C-terminal non-catalytic fragment of MMP2, possesses anti-angiogenic and anti-tumor properties and inhibits cell migration and cell adhesion to FGF2 and vitronectin. Ligand for integrin alpha-v/beta3 on the surface of blood vessels. The sequence is that of 72 kDa type IV collagenase (Mmp2) from Rattus norvegicus (Rat).